The following is a 191-amino-acid chain: dTTP/UTP pyrophosphatase (191 aa).

Aspartate 71 (proton acceptor) is an active-site residue.

The protein belongs to the Maf family. YhdE subfamily. The cofactor is a divalent metal cation.

Its subcellular location is the cytoplasm. It catalyses the reaction dTTP + H2O = dTMP + diphosphate + H(+). It carries out the reaction UTP + H2O = UMP + diphosphate + H(+). Functionally, nucleoside triphosphate pyrophosphatase that hydrolyzes dTTP and UTP. May have a dual role in cell division arrest and in preventing the incorporation of modified nucleotides into cellular nucleic acids. This is dTTP/UTP pyrophosphatase from Geobacter sulfurreducens (strain ATCC 51573 / DSM 12127 / PCA).